The sequence spans 96 residues: Colicin-K immunity protein (96 aa).

Residues 73 to 93 (ALFYLLMAIPVGLPSFIYYTL) form a helical membrane-spanning segment.

It is found in the cell membrane. In terms of biological role, this protein is able to protect a cell, which harbors the plasmid ColK encoding colicin K, against colicin K. This chain is Colicin-K immunity protein (cki), found in Escherichia coli.